Reading from the N-terminus, the 112-residue chain is Integration host factor subunit alpha (112 aa).

The protein belongs to the bacterial histone-like protein family. Heterodimer of an alpha and a beta chain.

Its function is as follows. This protein is one of the two subunits of integration host factor, a specific DNA-binding protein that functions in genetic recombination as well as in transcriptional and translational control. This is Integration host factor subunit alpha from Sinorhizobium fredii (strain NBRC 101917 / NGR234).